A 216-amino-acid polypeptide reads, in one-letter code: Serine/threonine-protein phosphatase 1 (216 aa).

Residues Asp-24, His-26, Asp-53, and Asn-79 each contribute to the Mn(2+) site. His-80 serves as the catalytic Proton donor. Mn(2+) is bound at residue His-185.

The protein belongs to the PPP phosphatase family. PP-1 subfamily. The cofactor is Mn(2+).

The catalysed reaction is O-phospho-L-seryl-[protein] + H2O = L-seryl-[protein] + phosphate. It catalyses the reaction O-phospho-L-threonyl-[protein] + H2O = L-threonyl-[protein] + phosphate. Its activity is regulated as follows. Inhibited by cadmium, copper, zinc when added cobalt when added concomitantly with manganese. Can hydrolyze phosphorylated Ser-, Thr- or Tyr-substrates in vitro. The natural substrate is unknown. This is Serine/threonine-protein phosphatase 1 (pphA) from Salmonella typhimurium (strain LT2 / SGSC1412 / ATCC 700720).